The primary structure comprises 628 residues: Propionate--CoA ligase (628 aa).

The protein belongs to the ATP-dependent AMP-binding enzyme family.

The enzyme catalyses propanoate + ATP + CoA = propanoyl-CoA + AMP + diphosphate. The protein operates within organic acid metabolism; propanoate degradation. Catalyzes the synthesis of propionyl-CoA from propionate and CoA. Also converts acetate to acetyl-CoA but with a lower specific activity. This chain is Propionate--CoA ligase (prpE), found in Salmonella typhimurium (strain LT2 / SGSC1412 / ATCC 700720).